The primary structure comprises 213 residues: Na(+)-translocating NADH-quinone reductase subunit D (213 aa).

6 helical membrane-spanning segments follow: residues 22–42, 43–63, 77–97, 101–121, 131–151, and 183–203; these read LIAI…TTAL, TMGF…SLLR, IIIS…FFTI, LSVF…AESM, FLDG…ISII, and LGLM…IWIV.

The protein belongs to the NqrDE/RnfAE family. As to quaternary structure, composed of six subunits; NqrA, NqrB, NqrC, NqrD, NqrE and NqrF.

Its subcellular location is the cell inner membrane. It catalyses the reaction a ubiquinone + n Na(+)(in) + NADH + H(+) = a ubiquinol + n Na(+)(out) + NAD(+). In terms of biological role, NQR complex catalyzes the reduction of ubiquinone-1 to ubiquinol by two successive reactions, coupled with the transport of Na(+) ions from the cytoplasm to the periplasm. NqrA to NqrE are probably involved in the second step, the conversion of ubisemiquinone to ubiquinol. This is Na(+)-translocating NADH-quinone reductase subunit D from Chlamydia trachomatis serovar A (strain ATCC VR-571B / DSM 19440 / HAR-13).